The following is a 1394-amino-acid chain: Ninein-like protein (1394 aa).

EF-hand domains are found at residues 8 to 43 (HYVS…LGLE) and 42 to 77 (LEEQ…VLSS). Disordered stretches follow at residues 77-99 (SGSG…SCAV) and 126-166 (KYGS…KEPQ). Phosphoserine is present on Ser149. The segment covering 151-166 (ESLKSDEDAESAKEPQ) has biased composition (basic and acidic residues). EF-hand domains are found at residues 197–232 (TPEN…IGLH) and 234–269 (LEKQ…HEPP). 5 residues coordinate Ca(2+): Asp247, Asp249, Asp251, Arg253, and Glu258. Coiled coils occupy residues 382-423 (RQEL…MDDC), 461-515 (WEQA…DSEK), and 544-584 (EQFT…SRQS). The short motif at 494-496 (KEN) is the KEN box element. A disordered region spans residues 578 to 602 (LPRSRQSPAGTPGTHRRRIPGRGPA). Positions 632 to 640 (RMQLETKVN) match the D-box motif. A coiled-coil region spans residues 835–863 (EKEKLEQTYREQVEGLVQEADVLRALLKN). Residues 866 to 893 (TVVSDQQERTPSSMSLGPDSRQQPTARQ) are compositionally biased toward polar residues. The disordered stretch occupies residues 866–977 (TVVSDQQERT…SARTLTGQGQ (112 aa)). Positions 939-951 (RSSENLGVRDNHQ) are enriched in basic and acidic residues. Coiled coils occupy residues 1057 to 1229 (SESE…ELTE) and 1269 to 1331 (GARV…LRKQ).

Interacts with gamma-tubulin and TUBGCP4. Interacts with anaphase promoting complex/cyclosome (APC/C). Interacts with CDC20 and FZR1. Interacts with LCA5 and USH2A. Phosphorylated by PLK1 which disrupts its centrosome association and interaction with gamma-tubulin. In terms of processing, ubiquitinated by the APC/C complex leading to its degradation.

The protein resides in the cytoplasm. It is found in the cytoskeleton. It localises to the microtubule organizing center. The protein localises to the centrosome. Involved in the microtubule organization in interphase cells. Overexpression induces the fragmentation of the Golgi, and causes lysosomes to disperse toward the cell periphery; it also interferes with mitotic spindle assembly. Involved in vesicle transport in photoreceptor cells. The protein is Ninein-like protein (Ninl) of Mus musculus (Mouse).